The primary structure comprises 118 residues: Ribulose bisphosphate carboxylase small subunit (118 aa).

The protein belongs to the RuBisCO small chain family. In terms of assembly, heterohexadecamer of 8 large and 8 small subunits.

Its function is as follows. RuBisCO catalyzes two reactions: the carboxylation of D-ribulose 1,5-bisphosphate, the primary event in carbon dioxide fixation, as well as the oxidative fragmentation of the pentose substrate. Both reactions occur simultaneously and in competition at the same active site. Although the small subunit is not catalytic it is essential for maximal activity. The protein is Ribulose bisphosphate carboxylase small subunit of Thiobacillus denitrificans (strain ATCC 25259 / T1).